We begin with the raw amino-acid sequence, 296 residues long: Thiamine-monophosphate kinase (296 aa).

Mg(2+) contacts are provided by Asp-32, Thr-46, and Asp-48. Asp-55 contributes to the substrate binding site. 2 residues coordinate Mg(2+): Asp-76 and Asp-121. Residues 120–121 (GD) and Arg-144 each bind ATP. Asp-206 provides a ligand contact to Mg(2+). ATP is bound at residue Ser-208. Asp-209 contacts Mg(2+). Tyr-293 contacts substrate.

It belongs to the thiamine-monophosphate kinase family.

It catalyses the reaction thiamine phosphate + ATP = thiamine diphosphate + ADP. Its pathway is cofactor biosynthesis; thiamine diphosphate biosynthesis; thiamine diphosphate from thiamine phosphate: step 1/1. Functionally, catalyzes the ATP-dependent phosphorylation of thiamine-monophosphate (TMP) to form thiamine-pyrophosphate (TPP), the active form of vitamin B1. This Archaeoglobus fulgidus (strain ATCC 49558 / DSM 4304 / JCM 9628 / NBRC 100126 / VC-16) protein is Thiamine-monophosphate kinase.